The chain runs to 531 residues: Arginine--tRNA ligase (531 aa).

The short motif at 113 to 123 (ANPTGPLHIGH) is the 'HIGH' region element.

Belongs to the class-I aminoacyl-tRNA synthetase family. Monomer.

The protein localises to the cytoplasm. It carries out the reaction tRNA(Arg) + L-arginine + ATP = L-arginyl-tRNA(Arg) + AMP + diphosphate. The sequence is that of Arginine--tRNA ligase from Campylobacter lari (strain RM2100 / D67 / ATCC BAA-1060).